The following is a 431-amino-acid chain: Mevalonate kinase (431 aa).

ATP is bound by residues K13, S139, and 144-150 (GAGLGSS). Residues S150 and E198 each contribute to the Mg(2+) site. The active-site Proton acceptor is the D209.

Belongs to the GHMP kinase family. Mevalonate kinase subfamily. As to quaternary structure, homodimer.

It is found in the cytoplasm. It localises to the cytosol. It catalyses the reaction (R)-mevalonate + ATP = (R)-5-phosphomevalonate + ADP + H(+). The protein operates within isoprenoid biosynthesis; isopentenyl diphosphate biosynthesis via mevalonate pathway; isopentenyl diphosphate from (R)-mevalonate: step 1/3. Functionally, mevalonate kinase; part of the second module of ergosterol biosynthesis pathway that includes the middle steps of the pathway. ERG12 converts mevalonate into 5-phosphomevalonate. The second module is carried out in the vacuole and involves the formation of farnesyl diphosphate, which is also an important intermediate in the biosynthesis of ubiquinone, dolichol, heme and prenylated proteins. Activity by the mevalonate kinase ERG12 first converts mevalonate into 5-phosphomevalonate. 5-phosphomevalonate is then further converted to 5-diphosphomevalonate by the phosphomevalonate kinase ERG8. The diphosphomevalonate decarboxylase MVD then produces isopentenyl diphosphate. The isopentenyl-diphosphate delta-isomerase IDI1 then catalyzes the 1,3-allylic rearrangement of the homoallylic substrate isopentenyl (IPP) to its highly electrophilic allylic isomer, dimethylallyl diphosphate (DMAPP). Finally the farnesyl diphosphate synthase ERG20 catalyzes the sequential condensation of isopentenyl pyrophosphate with dimethylallyl pyrophosphate, and then with the resultant geranylpyrophosphate to the ultimate product farnesyl pyrophosphate. The chain is Mevalonate kinase from Candida albicans (strain SC5314 / ATCC MYA-2876) (Yeast).